We begin with the raw amino-acid sequence, 460 residues long: Ribulose bisphosphate carboxylase large chain (460 aa).

K4 bears the N6,N6,N6-trimethyllysine mark. Residues N113 and T163 each coordinate substrate. Catalysis depends on K165, which acts as the Proton acceptor. Residue K167 coordinates substrate. 3 residues coordinate Mg(2+): K191, D193, and E194. K191 bears the N6-carboxylysine mark. The active-site Proton acceptor is H284. Substrate-binding residues include R285, H317, and S369.

This sequence belongs to the RuBisCO large chain family. Type I subfamily. As to quaternary structure, heterohexadecamer of 8 large chains and 8 small chains. Mg(2+) serves as cofactor.

The protein resides in the plastid. It localises to the chloroplast. The enzyme catalyses 2 (2R)-3-phosphoglycerate + 2 H(+) = D-ribulose 1,5-bisphosphate + CO2 + H2O. The catalysed reaction is D-ribulose 1,5-bisphosphate + O2 = 2-phosphoglycolate + (2R)-3-phosphoglycerate + 2 H(+). In terms of biological role, ruBisCO catalyzes two reactions: the carboxylation of D-ribulose 1,5-bisphosphate, the primary event in carbon dioxide fixation, as well as the oxidative fragmentation of the pentose substrate in the photorespiration process. Both reactions occur simultaneously and in competition at the same active site. In Cunninghamia lanceolata (China fir), this protein is Ribulose bisphosphate carboxylase large chain.